Reading from the N-terminus, the 291-residue chain is Ribosomal RNA small subunit methyltransferase A (291 aa).

Residues His-37, Leu-39, Gly-64, Glu-85, Asp-110, and Asn-131 each coordinate S-adenosyl-L-methionine.

It belongs to the class I-like SAM-binding methyltransferase superfamily. rRNA adenine N(6)-methyltransferase family. RsmA subfamily.

It is found in the cytoplasm. The catalysed reaction is adenosine(1518)/adenosine(1519) in 16S rRNA + 4 S-adenosyl-L-methionine = N(6)-dimethyladenosine(1518)/N(6)-dimethyladenosine(1519) in 16S rRNA + 4 S-adenosyl-L-homocysteine + 4 H(+). Its function is as follows. Specifically dimethylates two adjacent adenosines (A1518 and A1519) in the loop of a conserved hairpin near the 3'-end of 16S rRNA in the 30S particle. May play a critical role in biogenesis of 30S subunits. The polypeptide is Ribosomal RNA small subunit methyltransferase A (Dehalococcoides mccartyi (strain CBDB1)).